The following is a 148-amino-acid chain: MSTEGDHVPQAEEVIETVEVVEEETGSSPLSVEDSLKEVLKRALVHDGLARGIREASKALDRRQAHLCVLCESCDQEAYVKLVEALCAESQTPLVKVADPKILGEWAGLCVLDRDGNARKVVGCSCVAVTDYGEDSVALQTLLSSFAA.

It belongs to the eukaryotic ribosomal protein eS12 family. In terms of assembly, component of the small ribosomal subunit (SSU). Mature yeast ribosomes consist of a small (40S) and a large (60S) subunit. The 40S small subunit contains 1 molecule of ribosomal RNA (18S rRNA) and at least 33 different proteins. The large 60S subunit contains 3 rRNA molecules (25S, 5.8S and 5S rRNA) and at least 46 different proteins.

The protein localises to the cytoplasm. Component of the ribosome, a large ribonucleoprotein complex responsible for the synthesis of proteins in the cell. The small ribosomal subunit (SSU) binds messenger RNAs (mRNAs) and translates the encoded message by selecting cognate aminoacyl-transfer RNA (tRNA) molecules. The large subunit (LSU) contains the ribosomal catalytic site termed the peptidyl transferase center (PTC), which catalyzes the formation of peptide bonds, thereby polymerizing the amino acids delivered by tRNAs into a polypeptide chain. The nascent polypeptides leave the ribosome through a tunnel in the LSU and interact with protein factors that function in enzymatic processing, targeting, and the membrane insertion of nascent chains at the exit of the ribosomal tunnel. This chain is Small ribosomal subunit protein eS12B (rps1202), found in Schizosaccharomyces pombe (strain 972 / ATCC 24843) (Fission yeast).